The sequence spans 494 residues: Integrin beta-like protein 1 (494 aa).

The N-terminal stretch at 1-23 (MHPPGFKNFLLLVSSLFFIGLSA) is a signal peptide. Intrachain disulfides connect cysteine 40–cysteine 71, cysteine 51–cysteine 69, cysteine 63–cysteine 74, cysteine 76–cysteine 89, cysteine 91–cysteine 112, cysteine 96–cysteine 110, cysteine 104–cysteine 115, cysteine 117–cysteine 126, cysteine 132–cysteine 159, cysteine 143–cysteine 157, cysteine 151–cysteine 162, cysteine 164–cysteine 178, cysteine 180–cysteine 202, cysteine 185–cysteine 200, cysteine 194–cysteine 205, cysteine 207–cysteine 216, cysteine 220–cysteine 247, cysteine 231–cysteine 245, cysteine 239–cysteine 250, cysteine 252–cysteine 269, cysteine 271–cysteine 296, cysteine 276–cysteine 294, cysteine 288–cysteine 299, cysteine 301–cysteine 310, cysteine 316–cysteine 343, cysteine 327–cysteine 341, cysteine 335–cysteine 346, cysteine 348–cysteine 361, cysteine 363–cysteine 384, cysteine 368–cysteine 382, cysteine 376–cysteine 387, cysteine 389–cysteine 398, cysteine 404–cysteine 431, cysteine 415–cysteine 429, cysteine 423–cysteine 434, cysteine 436–cysteine 448, cysteine 450–cysteine 471, cysteine 455–cysteine 469, cysteine 463–cysteine 474, and cysteine 476–cysteine 485. 10 I-EGF domains span residues 40–90 (CRLS…PLCE), 91–127 (CHDW…EACQ), 132–179 (CDLT…KFCE), 180–217 (CDDR…DKCE), 220–270 (CDIT…DTCE), 271–311 (CDER…KKCE), 316–362 (CPLS…KTCE), 363–399 (CDDR…KLCQ), 404–449 (CNMT…EFCD), and 450–486 (CDDR…NACE). One copy of the I repeat lies at 51 to 95 (CRAPGQPPGSALCHDRGRCECGVCICHVTEPGTYFGPLCECHDWV). The interval 51–494 (CRAPGQPPGS…CEIWLGTEYP (444 aa)) is cysteine-rich tandem repeats. The II repeat unit spans residues 96 to 142 (CETYDGKTCAGHGTCDCGKCKCDVGWSGEACQYPTKCDLTKKISNQM). An III repeat occupies 143 to 184 (CKNSQDVICSNAGTCHCGRCKCDNSDGHGLIYGKFCECDDRE). Residues 185–230 (CIDDETEEICGGHGKCYCGNCYCEAGWHGDKCEFQCDITPWESKRR) form an IV repeat. The stretch at 231 to 275 (CTSPDGKVCSNRGTCVCGECSCHDVDPTGDWGDIHGDTCECDERD) is one V repeat. One copy of the VI repeat lies at 276–326 (CRAVYDRYSDDFCSGHGQCNCGRCDCRAGWYGKKCEHPKNCPLSAEESTRK). Residues 327–367 (CQGSSDLPCSGRGRCECGRCTCYPPGDSRVYGKTCECDDRR) form a VII repeat. The VIII repeat unit spans residues 368 to 414 (CEDLDGVVCGGRGTCSCGRCVCEKGWFGKLCQHPRKCNMTEEQSRSL). N-linked (GlcNAc...) asparagine glycosylation occurs at asparagine 405. The stretch at 415 to 454 (CESADGTLCSGKGSCHCGKCICSGEEWYISGEFCDCDDRD) is one IX repeat. The X repeat unit spans residues 455 to 494 (CDKHDGLICTGNGICSCGNCECWDGWNGNACEIWLGTEYP).

The protein resides in the secreted. The sequence is that of Integrin beta-like protein 1 (Itgbl1) from Rattus norvegicus (Rat).